Consider the following 607-residue polypeptide: MVCTRKTKTLVSTCVILSGMTNIICLLYVGWVTNYIASVYVRGQEPAPDKKLEEDKGDTLKIIERLDHLENVIKQHIQEAPAKPEEAEAEPFTDSSLFAHWGQELSPEGRRVALKQFQYYGYNAYLSDRLPLDRPLPDLRPSGCRNLSFPDSLPEVSIVFIFVNEALSVLLRSIHSAMERTPPHLLKEIILVDDNSSNEELKEKLTEYVDKVNSQKPGFIKVVRHSKQEGLIRSRVSGWRAATAPVVALFDAHVEFNVGWAEPVLTRIKENRKRIISPSFDNIKYDNFEIEEYPLAAQGFDWELWCRYLNPPKAWWKLENSTAPIRSPALIGCFIVDRQYFQEIGLLDEGMEVYGGENVELGIRVWQCGGSVEVLPCSRIAHIERAHKPYTEDLTAHVRRNALRVAEVWMDEFKSHVYMAWNIPQEDSGIDIGDITARKALRKQLQCKTFRWYLVSVYPEMRMYSDIIAYGVLQNSLKTDLCLDQGPDTENVPIMYICHGMTPQNVYYTSSQQIHVGILSPTVDDDDNRCLVDVNSRPRLIECSYAKAKRMKLHWQFSQGGPIQNRKSKRCLELQENSDLEFGFQLVLQKCSGQHWSITNVLRSLAS.

Over 1 to 12 (MVCTRKTKTLVS) the chain is Cytoplasmic. Residues 13-35 (TCVILSGMTNIICLLYVGWVTNY) traverse the membrane as a helical; Signal-anchor for type II membrane protein segment. At 36–607 (IASVYVRGQE…ITNVLRSLAS (572 aa)) the chain is on the lumenal side. Disulfide bonds link cysteine 144–cysteine 377, cysteine 368–cysteine 447, cysteine 482–cysteine 498, cysteine 530–cysteine 543, and cysteine 571–cysteine 591. Asparagine 146 is a glycosylation site (N-linked (GlcNAc...) asparagine). Residues 153–267 (LPEVSIVFIF…VGWAEPVLTR (115 aa)) form a catalytic subdomain A region. Aspartate 194 lines the substrate pocket. The N-linked (GlcNAc...) asparagine glycan is linked to asparagine 195. Mn(2+) contacts are provided by aspartate 251 and histidine 253. The N-linked (GlcNAc...) asparagine glycan is linked to asparagine 320. Positions 324–385 (PIRSPALIGC…PCSRIAHIER (62 aa)) are catalytic subdomain B. Histidine 382 is a binding site for Mn(2+). Residues arginine 385 and tyrosine 390 each coordinate substrate. The 131-residue stretch at 469–599 (AYGVLQNSLK…KCSGQHWSIT (131 aa)) folds into the Ricin B-type lectin domain.

Belongs to the glycosyltransferase 2 family. GalNAc-T subfamily. Requires Mn(2+) as cofactor.

It is found in the golgi apparatus membrane. The catalysed reaction is L-seryl-[protein] + UDP-N-acetyl-alpha-D-galactosamine = a 3-O-[N-acetyl-alpha-D-galactosaminyl]-L-seryl-[protein] + UDP + H(+). It carries out the reaction L-threonyl-[protein] + UDP-N-acetyl-alpha-D-galactosamine = a 3-O-[N-acetyl-alpha-D-galactosaminyl]-L-threonyl-[protein] + UDP + H(+). It functions in the pathway protein modification; protein glycosylation. In terms of biological role, catalyzes the initial reaction in O-linked oligosaccharide biosynthesis, the transfer of an N-acetyl-D-galactosamine (GalNAc) residue from UDP-GalNAc to a serine or threonine residue on the protein receptor. This Homo sapiens (Human) protein is Polypeptide N-acetylgalactosaminyltransferase 18 (GALNT18).